Consider the following 328-residue polypeptide: Probable cytosolic iron-sulfur protein assembly protein 1 (328 aa).

WD repeat units lie at residues 12 to 49 (LHGDRCWSVDISKGLLATGSADRKIKLVDVRNFKLVEE), 54 to 93 (AHKKAVRSVAWRPHCNVLAAGSFDTTVSIWGRDDDDYSGE), 102 to 141 (GHENEVKSVAWSHDGAYLATCSRDKSVWIWEADELSEEFE), 148 to 187 (EHSQDVKHIVWHASRLLLASSSYDDTVRIWAEQDDDWECA), 192 to 233 (GHGG…ADVF), 246 to 284 (VHTRAVYSVSWSADGLIASVGSDGVLAVYKEVQAGRWEV), and 291 to 328 (AHTVYEINVVKWLALDGRVLLVTGGDDGCVNVWELREE).

The protein belongs to the WD repeat CIA1 family. Interacts with NAR1.

The protein resides in the cytoplasm. It is found in the nucleus. Functionally, essential component of the cytosolic iron-sulfur (Fe/S) protein assembly machinery. Required for the maturation of extramitochondrial Fe/S proteins. This chain is Probable cytosolic iron-sulfur protein assembly protein 1, found in Eremothecium gossypii (strain ATCC 10895 / CBS 109.51 / FGSC 9923 / NRRL Y-1056) (Yeast).